A 346-amino-acid chain; its full sequence is Dihydroorotase (346 aa).

Zn(2+) contacts are provided by His-17 and His-19. Substrate is bound by residues 19-21 (HVR) and Asn-45. Zn(2+) is bound by residues Lys-102, His-139, and His-177. Lys-102 is modified (N6-carboxylysine). Substrate is bound at residue His-139. Leu-222 provides a ligand contact to substrate. Residue Asp-250 participates in Zn(2+) binding. Asp-250 is a catalytic residue. Residues His-254 and Ala-266 each coordinate substrate.

It belongs to the metallo-dependent hydrolases superfamily. DHOase family. Class II DHOase subfamily. In terms of assembly, homodimer. Requires Zn(2+) as cofactor.

It catalyses the reaction (S)-dihydroorotate + H2O = N-carbamoyl-L-aspartate + H(+). It participates in pyrimidine metabolism; UMP biosynthesis via de novo pathway; (S)-dihydroorotate from bicarbonate: step 3/3. Catalyzes the reversible cyclization of carbamoyl aspartate to dihydroorotate. In Delftia acidovorans (strain DSM 14801 / SPH-1), this protein is Dihydroorotase.